Reading from the N-terminus, the 1377-residue chain is Endoribonuclease Dicer homolog 2b (1377 aa).

Residues 1 to 15 show a composition bias toward gly residues; it reads MGGPLTAAGGRGDGG. Residues 1–30 are disordered; the sequence is MGGPLTAAGGRGDGGAKAVEPLRPPPPPDP. A Helicase ATP-binding domain is found at 41 to 222; that stretch reads ALERAVRGNT…HNYSKQISEI (182 aa). Residue 54 to 61 coordinates ATP; that stretch reads LETGSGKT. The short motif at 163-166 is the DECH box element; sequence DECH. In terms of domain architecture, Helicase C-terminal spans 388–561; sequence TLLQYRHMQD…DTYYRVESTP (174 aa). The Dicer dsRNA-binding fold domain occupies 534–626; sequence SLRLGSISCQ…LPELDVPCDE (93 aa). The PAZ domain maps to 798 to 913; it reads RDIDLLQTKD…LPPELCRIIM (116 aa). RNase III domains are found at residues 940 to 1095 and 1132 to 1276; these read SVKL…STAG and VRSL…LDSK. Mg(2+)-binding residues include Glu-1171, Asp-1262, and Glu-1265. The DRBM domain maps to 1302–1367; the sequence is DPVKGLQEFC…SKAVLKDLIA (66 aa).

The protein belongs to the helicase family. Dicer subfamily. May interact with ARGONAUTE1 or PINHEAD through their common PAZ domains. Requires Mg(2+) as cofactor. It depends on Mn(2+) as a cofactor.

The protein resides in the nucleus. Functionally, probably involved in the RNA silencing pathway. May cleave double-stranded RNA to produce short 21-24 nucleotides (nt) RNAs which target the selective destruction of complementary RNAs. This chain is Endoribonuclease Dicer homolog 2b (DCL2B), found in Oryza sativa subsp. japonica (Rice).